Consider the following 256-residue polypeptide: Glutamate racemase (256 aa).

Substrate contacts are provided by residues 11–12 (DS) and 43–44 (YG). Cys74 serves as the catalytic Proton donor/acceptor. Substrate is bound at residue 75-76 (NT). Residue Cys182 is the Proton donor/acceptor of the active site. A substrate-binding site is contributed by 183–184 (TH).

The protein belongs to the aspartate/glutamate racemases family.

The enzyme catalyses L-glutamate = D-glutamate. The protein operates within cell wall biogenesis; peptidoglycan biosynthesis. Its function is as follows. Provides the (R)-glutamate required for cell wall biosynthesis. This Leptospira interrogans serogroup Icterohaemorrhagiae serovar Lai (strain 56601) protein is Glutamate racemase.